A 612-amino-acid chain; its full sequence is Peroxisomal targeting signal receptor (612 aa).

The residue at position 1 (Met1) is an N-acetylmethionine. Residues 1–24 form a disordered region; that stretch reads MDVGSCSVGNNPLAQLHKHTQQNK. A Glycyl cysteine thioester (Cys-Gly) (interchain with G-Cter in ubiquitin) cross-link involves residue Cys6. The interval 7 to 29 is amphipathic helix 1 (AH1); that stretch reads SVGNNPLAQLHKHTQQNKSLQFN. Glycyl lysine isopeptide (Lys-Gly) (interchain with G-Cter in ubiquitin) cross-links involve residues Lys18 and Lys24. Ser61 bears the Phosphoserine mark. The stretch at 64 to 97 is one TPR 1 repeat; it reads NMANMQRFINGEPLIDDKRRMEIGPSSGRLPPFS. Residues 70-104 are amphipathic helix 2 (AH2); the sequence is RFINGEPLIDDKRRMEIGPSSGRLPPFSNVHSLQT. A WxxxF/Y motif 1 motif is present at residues 120–124; it reads WSQEF. The interval 129-151 is disordered; that stretch reads SIQNRNADTGNSEKAWQRGSTTA. The tract at residues 158–174 is amphipathic helix 3 (AH3); it reads PNTMMNNYAYASMNSLS. A disordered region spans residues 182–202; it reads AFMNQQQSGRSKEGVNEQEQQ. Positions 204–208 match the WxxxF/Y motif 2 motif; the sequence is WTDQF. Positions 257 to 273 are amphipathic helix 4 (AH4); sequence FQEVWDSIHKDAEEVLP. TPR repeat units follow at residues 313 to 346, 347 to 380, 381 to 418, 419 to 456, 457 to 490, 491 to 524, and 525 to 558; these read PNAY…KPDH, VDAW…DPKN, LEAM…IWSR, IKQQ…STID, PEIQ…NPND, ELMW…KPSF, and VRAR…HEVN.

It belongs to the peroxisomal targeting signal receptor family. Interacts (via WxxxF/Y and LVxEF motifs) with PEX14; promoting translocation through the PEX13-PEX14 docking complex. Post-translationally, monoubiquitinated at Cys-6 by PEX2 during PEX5 passage through the retrotranslocation channel: monoubiquitination acts as a signal for PEX5 extraction and is required for proper export from peroxisomes and recycling. Ubiquitination at Cys-6 is UBC4-independent but requires the presence of PEX4. When PEX5 recycling is compromised, polyubiquitinated at Lys-18 and Lys-24 by PEX10 during its passage through the retrotranslocation channel, leading to its degradation. Ubiquitination at Lys-18 and Lys-24 are UBC4-dependent. Monoubiquitination at Cys-6 and polyubiquitination at Lys-18 and Lys-24 are removed by UBP15 in the cytosol, resetting PEX5 for a subsequent import cycle.

The protein localises to the cytoplasm. It localises to the cytosol. It is found in the peroxisome matrix. In terms of biological role, receptor that mediates peroxisomal import of proteins containing a C-terminal PTS1-type tripeptide peroxisomal targeting signal (SKL-type). Binds to cargo proteins containing a PTS1 peroxisomal targeting signal in the cytosol, and translocates them into the peroxisome matrix by passing through the PEX13-PEX14 docking complex along with cargo proteins. PEX5 receptor is then retrotranslocated into the cytosol, leading to release of bound cargo in the peroxisome matrix, and reset for a subsequent peroxisome import cycle. The chain is Peroxisomal targeting signal receptor from Saccharomyces cerevisiae (strain ATCC 204508 / S288c) (Baker's yeast).